Consider the following 94-residue polypeptide: Antifungal protein (94 aa).

A signal peptide spans 1 to 21 (MKFVSLASLGFALVAALGAVA). A propeptide spanning residues 22-43 (TPVEADSLTAGGLDARDESAVL) is cleaved from the precursor. 4 disulfide bridges follow: C50-C76, C57-C83, C69-C71, and C92-C94.

Belongs to the antifungal protein pafB family.

Its subcellular location is the secreted. It localises to the host cytoplasm. In terms of biological role, antifungal protein that acts as an inhibitor of growth of a variety of fungal species. In Aspergillus giganteus, this protein is Antifungal protein (afp).